Here is a 155-residue protein sequence, read N- to C-terminus: Altered inheritance rate of mitochondria protein 29 (155 aa).

Residue Ser78 is modified to Phosphoserine.

The protein belongs to the UPF0538 family.

The protein resides in the cytoplasm. In terms of biological role, may be involved in mitochondrial organization and biogenesis. The polypeptide is Altered inheritance rate of mitochondria protein 29 (AIM29) (Saccharomyces cerevisiae (strain ATCC 204508 / S288c) (Baker's yeast)).